We begin with the raw amino-acid sequence, 336 residues long: Holliday junction branch migration complex subunit RuvB (336 aa).

The large ATPase domain (RuvB-L) stretch occupies residues 4 to 184 (ADRLISAGTT…FGIVQRLEFY (181 aa)). Residues isoleucine 23, arginine 24, glycine 65, lysine 68, threonine 69, threonine 70, 131 to 133 (EDY), arginine 174, tyrosine 184, and arginine 221 contribute to the ATP site. Threonine 69 contributes to the Mg(2+) binding site. The small ATPAse domain (RuvB-S) stretch occupies residues 185 to 255 (QVPDLQYIVS…IAAQALDMLN (71 aa)). The segment at 258–336 (AEGFDYMDRK…HFGITPPEMP (79 aa)) is head domain (RuvB-H). Arginine 294, arginine 313, and arginine 318 together coordinate DNA.

The protein belongs to the RuvB family. In terms of assembly, homohexamer. Forms an RuvA(8)-RuvB(12)-Holliday junction (HJ) complex. HJ DNA is sandwiched between 2 RuvA tetramers; dsDNA enters through RuvA and exits via RuvB. An RuvB hexamer assembles on each DNA strand where it exits the tetramer. Each RuvB hexamer is contacted by two RuvA subunits (via domain III) on 2 adjacent RuvB subunits; this complex drives branch migration. In the full resolvosome a probable DNA-RuvA(4)-RuvB(12)-RuvC(2) complex forms which resolves the HJ.

Its subcellular location is the cytoplasm. It carries out the reaction ATP + H2O = ADP + phosphate + H(+). Its function is as follows. The RuvA-RuvB-RuvC complex processes Holliday junction (HJ) DNA during genetic recombination and DNA repair, while the RuvA-RuvB complex plays an important role in the rescue of blocked DNA replication forks via replication fork reversal (RFR). RuvA specifically binds to HJ cruciform DNA, conferring on it an open structure. The RuvB hexamer acts as an ATP-dependent pump, pulling dsDNA into and through the RuvAB complex. RuvB forms 2 homohexamers on either side of HJ DNA bound by 1 or 2 RuvA tetramers; 4 subunits per hexamer contact DNA at a time. Coordinated motions by a converter formed by DNA-disengaged RuvB subunits stimulates ATP hydrolysis and nucleotide exchange. Immobilization of the converter enables RuvB to convert the ATP-contained energy into a lever motion, pulling 2 nucleotides of DNA out of the RuvA tetramer per ATP hydrolyzed, thus driving DNA branch migration. The RuvB motors rotate together with the DNA substrate, which together with the progressing nucleotide cycle form the mechanistic basis for DNA recombination by continuous HJ branch migration. Branch migration allows RuvC to scan DNA until it finds its consensus sequence, where it cleaves and resolves cruciform DNA. The polypeptide is Holliday junction branch migration complex subunit RuvB (Shigella flexneri serotype 5b (strain 8401)).